A 373-amino-acid polypeptide reads, in one-letter code: Envelope glycoprotein C homolog (373 aa).

Residues 1–25 (MVSNMRSTRTALTGWVGIFLVLSLQ) form the signal peptide. Positions 58 to 93 (EVPNSPTTELSTTVATKTAVPTTESTSSSEAHRNSS) are disordered. The segment covering 59 to 68 (VPNSPTTELS) has biased composition (polar residues). Low complexity predominate over residues 69 to 80 (TTVATKTAVPTT). N-linked (GlcNAc...) asparagine; by host glycosylation is found at Asn-91, Asn-111, Asn-203, and Asn-345. In terms of domain architecture, Ig-like spans 249 to 347 (PASVDVLAPP…GDMISTSNAT (99 aa)).

It belongs to the herpesviridae glycoprotein C family.

This chain is Envelope glycoprotein C homolog (gC), found in Gallus gallus (Chicken).